The following is a 154-amino-acid chain: Deoxyuridine 5'-triphosphate nucleotidohydrolase (154 aa).

Residues 64–66 (RSG), asparagine 77, 81–83 (TID), and lysine 91 contribute to the substrate site.

It belongs to the dUTPase family. In terms of assembly, homotrimer. The cofactor is Mg(2+).

The enzyme catalyses dUTP + H2O = dUMP + diphosphate + H(+). The protein operates within pyrimidine metabolism; dUMP biosynthesis; dUMP from dCTP (dUTP route): step 2/2. In terms of biological role, this enzyme is involved in nucleotide metabolism: it produces dUMP, the immediate precursor of thymidine nucleotides and it decreases the intracellular concentration of dUTP so that uracil cannot be incorporated into DNA. This chain is Deoxyuridine 5'-triphosphate nucleotidohydrolase, found in Mycobacterium avium (strain 104).